Reading from the N-terminus, the 230-residue chain is Phosphoribosylformylglycinamidine synthase subunit PurQ (230 aa).

Positions 3-230 (SAIIVFPGTN…LFQSIVESLS (228 aa)) constitute a Glutamine amidotransferase type-1 domain. C87 serves as the catalytic Nucleophile. Active-site residues include H204 and E206.

In terms of assembly, part of the FGAM synthase complex composed of 1 PurL, 1 PurQ and 2 PurS subunits.

Its subcellular location is the cytoplasm. The catalysed reaction is N(2)-formyl-N(1)-(5-phospho-beta-D-ribosyl)glycinamide + L-glutamine + ATP + H2O = 2-formamido-N(1)-(5-O-phospho-beta-D-ribosyl)acetamidine + L-glutamate + ADP + phosphate + H(+). It carries out the reaction L-glutamine + H2O = L-glutamate + NH4(+). Its pathway is purine metabolism; IMP biosynthesis via de novo pathway; 5-amino-1-(5-phospho-D-ribosyl)imidazole from N(2)-formyl-N(1)-(5-phospho-D-ribosyl)glycinamide: step 1/2. Functionally, part of the phosphoribosylformylglycinamidine synthase complex involved in the purines biosynthetic pathway. Catalyzes the ATP-dependent conversion of formylglycinamide ribonucleotide (FGAR) and glutamine to yield formylglycinamidine ribonucleotide (FGAM) and glutamate. The FGAM synthase complex is composed of three subunits. PurQ produces an ammonia molecule by converting glutamine to glutamate. PurL transfers the ammonia molecule to FGAR to form FGAM in an ATP-dependent manner. PurS interacts with PurQ and PurL and is thought to assist in the transfer of the ammonia molecule from PurQ to PurL. In Rhodospirillum rubrum (strain ATCC 11170 / ATH 1.1.1 / DSM 467 / LMG 4362 / NCIMB 8255 / S1), this protein is Phosphoribosylformylglycinamidine synthase subunit PurQ.